The sequence spans 214 residues: Holliday junction branch migration complex subunit RuvA (214 aa).

The interval 1-64 is domain I; that stretch reads MITRIRGEML…EDAMTLYGFT (64 aa). The tract at residues 65 to 143 is domain II; it reads SGEQLAVFEL…DITSKDAYQD (79 aa). The segment at 144–160 is flexible linker; the sequence is ISASEKLDNTGEKLGIS. Residues 161–214 are domain III; it reads TRHKHLDELKAALSSLGYTNREIEKTVDAIQGQITEGQDMEELLRLALQKLNTK.

Belongs to the RuvA family. As to quaternary structure, homotetramer. Forms an RuvA(8)-RuvB(12)-Holliday junction (HJ) complex. HJ DNA is sandwiched between 2 RuvA tetramers; dsDNA enters through RuvA and exits via RuvB. An RuvB hexamer assembles on each DNA strand where it exits the tetramer. Each RuvB hexamer is contacted by two RuvA subunits (via domain III) on 2 adjacent RuvB subunits; this complex drives branch migration. In the full resolvosome a probable DNA-RuvA(4)-RuvB(12)-RuvC(2) complex forms which resolves the HJ.

The protein localises to the cytoplasm. In terms of biological role, the RuvA-RuvB-RuvC complex processes Holliday junction (HJ) DNA during genetic recombination and DNA repair, while the RuvA-RuvB complex plays an important role in the rescue of blocked DNA replication forks via replication fork reversal (RFR). RuvA specifically binds to HJ cruciform DNA, conferring on it an open structure. The RuvB hexamer acts as an ATP-dependent pump, pulling dsDNA into and through the RuvAB complex. HJ branch migration allows RuvC to scan DNA until it finds its consensus sequence, where it cleaves and resolves the cruciform DNA. This Natranaerobius thermophilus (strain ATCC BAA-1301 / DSM 18059 / JW/NM-WN-LF) protein is Holliday junction branch migration complex subunit RuvA.